Here is a 102-residue protein sequence, read N- to C-terminus: Small ribosomal subunit protein uS10 (102 aa).

A disordered region spans residues 34–61 (MAGPIPLPTKTLKVTTRKSTDGEGSSSF).

It belongs to the universal ribosomal protein uS10 family. Part of the 30S ribosomal subunit.

Involved in the binding of tRNA to the ribosomes. In Methanococcus aeolicus (strain ATCC BAA-1280 / DSM 17508 / OCM 812 / Nankai-3), this protein is Small ribosomal subunit protein uS10.